The following is a 322-amino-acid chain: NADH-quinone oxidoreductase subunit H (322 aa).

8 consecutive transmembrane segments (helical) span residues 15–35, 81–101, 114–134, 149–169, 184–204, 237–257, 265–285, and 299–319; these read IFQS…MSVV, ITFL…ITII, IGVL…LLAG, ATAQ…GVVA, IGLW…IAGL, FFIG…TMFF, FPSY…FILI, and LFGW…TALI.

It belongs to the complex I subunit 1 family. As to quaternary structure, NDH-1 is composed of 13 different subunits. Subunits NuoA, H, J, K, L, M, N constitute the membrane sector of the complex.

It localises to the cell membrane. The catalysed reaction is a quinone + NADH + 5 H(+)(in) = a quinol + NAD(+) + 4 H(+)(out). Its function is as follows. NDH-1 shuttles electrons from NADH, via FMN and iron-sulfur (Fe-S) centers, to quinones in the respiratory chain. The immediate electron acceptor for the enzyme in this species is believed to be ubiquinone. Couples the redox reaction to proton translocation (for every two electrons transferred, four hydrogen ions are translocated across the cytoplasmic membrane), and thus conserves the redox energy in a proton gradient. This subunit may bind ubiquinone. The chain is NADH-quinone oxidoreductase subunit H from Buchnera aphidicola subsp. Baizongia pistaciae (strain Bp).